A 207-amino-acid polypeptide reads, in one-letter code: MADS-box protein AGL71 (207 aa).

An MADS-box domain is found at 1 to 61 (MVRGKIEIKK…GRLHEYSSSQ (61 aa)). The region spanning 88-178 (LQELKMEIDR…LEEVNMHHSS (91 aa)) is the K-box domain.

It is found in the nucleus. Functionally, MADS-box transcription factor that acts with AGL42 and AGL72 in the control of flowering time. Promotes flowering at the shoot apical and axillary meristems. Seems to act through a gibberellin-dependent pathway. Interacts genetically with SOC1 and its expression is directly regulated by SOC1. This Arabidopsis thaliana (Mouse-ear cress) protein is MADS-box protein AGL71 (AGL71).